The primary structure comprises 452 residues: Phosphoglucosamine mutase (452 aa).

Catalysis depends on serine 112, which acts as the Phosphoserine intermediate. Mg(2+)-binding residues include serine 112, aspartate 251, aspartate 253, and aspartate 255. Serine 112 carries the post-translational modification Phosphoserine.

This sequence belongs to the phosphohexose mutase family. The cofactor is Mg(2+). In terms of processing, activated by phosphorylation.

The enzyme catalyses alpha-D-glucosamine 1-phosphate = D-glucosamine 6-phosphate. Functionally, catalyzes the conversion of glucosamine-6-phosphate to glucosamine-1-phosphate. This Bordetella bronchiseptica (strain ATCC BAA-588 / NCTC 13252 / RB50) (Alcaligenes bronchisepticus) protein is Phosphoglucosamine mutase.